The primary structure comprises 461 residues: UPF0053 protein YhdT (461 aa).

In terms of domain architecture, CNNM transmembrane spans 1 to 202 (MDDIDSLILI…LKNGEINPSE (202 aa)). The next 3 helical transmembrane spans lie at 8-28 (ILIG…FAIV), 103-123 (VSFA…GELA), and 137-157 (LLIA…IWIL). CBS domains follow at residues 221–280 (MIPR…MTEE) and 290–347 (YVRP…IRDE).

It belongs to the UPF0053 family.

The protein resides in the cell membrane. In Bacillus subtilis (strain 168), this protein is UPF0053 protein YhdT (yhdT).